The sequence spans 298 residues: MSYKSGFVSVIGRPNVGKSTLLNTITGQKIAIMSNKPQTTRNTIRGVITNKECQLILIDTPGIHKPKTKLGEYMVNVASETIKEVDLILFLVEANTQPGAQDVNIIQQLKQIKTPVFLILNKVDLISKDKLLAIIDSYSKLMDFKAIIPISALKNDGIDLILKEALDYIPEGPQFFSEDMLTDQPEKVIAAEMIREKVLLNLDDEVPHGVGVEVTSFKEREDGLINIQATIYCEKSSHKGIIIGKQGNMLKKIGSAARYEIERLLDTKIFLELWVKVKPDWRNSDNMLKTLGYKTNKN.

The Era-type G domain maps to 4-171 (KSGFVSVIGR…LKEALDYIPE (168 aa)). Residues 12 to 19 (GRPNVGKS) form a G1 region. 12–19 (GRPNVGKS) is a GTP binding site. Residues 38-42 (QTTRN) form a G2 region. Residues 59-62 (DTPG) are G3. GTP-binding positions include 59-63 (DTPGI) and 121-124 (NKVD). The G4 stretch occupies residues 121–124 (NKVD). Positions 150–152 (ISA) are G5. The region spanning 202-279 (LDDEVPHGVG…FLELWVKVKP (78 aa)) is the KH type-2 domain.

The protein belongs to the TRAFAC class TrmE-Era-EngA-EngB-Septin-like GTPase superfamily. Era GTPase family. As to quaternary structure, monomer.

Its subcellular location is the cytoplasm. The protein localises to the cell membrane. Functionally, an essential GTPase that binds both GDP and GTP, with rapid nucleotide exchange. Plays a role in 16S rRNA processing and 30S ribosomal subunit biogenesis and possibly also in cell cycle regulation and energy metabolism. The protein is GTPase Era of Ruminiclostridium cellulolyticum (strain ATCC 35319 / DSM 5812 / JCM 6584 / H10) (Clostridium cellulolyticum).